A 541-amino-acid chain; its full sequence is tRNA uridine(34) acetyltransferase (541 aa).

The radical S-adenosyl-L-methionine (rSAM) stretch occupies residues 76–336 (KPVRTISGVA…GEYKPYREEE (261 aa)). The region spanning 79–350 (RTISGVAVVA…ISYAKSIMPK (272 aa)) is the Radical SAM core domain. The [4Fe-4S] cluster site is built by C96, C101, and C104. Acetyl-CoA contacts are provided by residues K156, 467-470 (QLHV), 491-493 (YGR), and Y524. In terms of domain architecture, N-acetyltransferase spans 401-541 (VMYKKGIMPD…VGAYMGKYLE (141 aa)).

This sequence belongs to the ELP3 family. The cofactor is [4Fe-4S] cluster.

The enzyme catalyses uridine(34) in tRNA + acetyl-CoA + S-adenosyl-L-methionine + H2O = 5-(carboxymethyl)uridine(34) in tRNA + 5'-deoxyadenosine + L-methionine + CoA + 2 H(+). Its pathway is tRNA modification. Functionally, tRNA uridine(34) acetyltransferase, which mediates formation of carboxymethyluridine in the wobble base at position 34 in tRNAs. The proposed mechanism is the following: (i) recruits S-adenosyl-L-methionine and cleaves it to generate a 5'-deoxyadenosine radical (5'-dA) in the radical S-adenosyl-L-methionine (rSAM) region, (ii) hydrolyzes acetyl-CoA in the N-acetyltransferase domain and (iii) an acetyl radical is formed by the products of the two domains and (iv) is transferred onto the C5 position of uridine(34) in the bound tRNA molecule. Does not show protein lysine acetyltransferase activity. The chain is tRNA uridine(34) acetyltransferase from Methanocaldococcus jannaschii (strain ATCC 43067 / DSM 2661 / JAL-1 / JCM 10045 / NBRC 100440) (Methanococcus jannaschii).